Here is a 153-residue protein sequence, read N- to C-terminus: Small ribosomal subunit protein uS5 (153 aa).

In terms of domain architecture, S5 DRBM spans 15 to 78 (FQEVVVNVGR…DDAFKNLIHV (64 aa)).

Belongs to the universal ribosomal protein uS5 family. As to quaternary structure, part of the 30S ribosomal subunit. Contacts proteins S4 and S8.

Functionally, with S4 and S12 plays an important role in translational accuracy. Located at the back of the 30S subunit body where it stabilizes the conformation of the head with respect to the body. This chain is Small ribosomal subunit protein uS5, found in Helicobacter acinonychis (strain Sheeba).